The sequence spans 280 residues: tRNA pseudouridine synthase A (280 aa).

The Nucleophile role is filled by aspartate 55. Position 110 (tyrosine 110) interacts with substrate.

The protein belongs to the tRNA pseudouridine synthase TruA family.

It carries out the reaction uridine(38/39/40) in tRNA = pseudouridine(38/39/40) in tRNA. Functionally, formation of pseudouridine at positions 38, 39 and 40 in the anticodon stem and loop of transfer RNAs. This Methanosphaerula palustris (strain ATCC BAA-1556 / DSM 19958 / E1-9c) protein is tRNA pseudouridine synthase A.